The following is a 111-amino-acid chain: Large ribosomal subunit protein P2 (111 aa).

Low complexity predominate over residues alanine 63–alanine 84. A disordered region spans residues alanine 63–aspartate 111. Basic and acidic residues predominate over residues glutamate 85–glutamate 97. Phosphoserine is present on serine 98.

As to quaternary structure, part of the ribosomal stalk of the large ribosomal subunit; P1 and P2 exist as dimers which assemble on the P0 scaffold.

In terms of biological role, plays an important role in the elongation step of protein synthesis. The protein is Large ribosomal subunit protein P2 of Artemia salina (Brine shrimp).